The sequence spans 276 residues: NADH-cytochrome b5 reductase 2 (276 aa).

Residues 15 to 127 enclose the FAD-binding FR-type domain; it reads EAKYPLPLIE…RGPTGRLFYN (113 aa). Residue Lys-17 is modified to N6-acetyllysine. Phosphotyrosine is present on Tyr-18. Residues 107–137 and 146–181 each bind FAD; these read ENMK…IKTD and LVHH…RMSL.

Belongs to the flavoprotein pyridine nucleotide cytochrome reductase family. It depends on FAD as a cofactor.

The catalysed reaction is 2 Fe(III)-[cytochrome b5] + NADH = 2 Fe(II)-[cytochrome b5] + NAD(+) + H(+). NADH-cytochrome b5 reductases are involved in desaturation and elongation of fatty acids, cholesterol biosynthesis, drug metabolism, and, in erythrocyte, methemoglobin reduction. Responsible for NADH-dependent lucigenin chemiluminescence in spermatozoa by reducing both lucigenin and 2-[4-iodophenyl]-3-[4-nitrophenyl]-5-[2,4-disulfophenyl]-2H tetrazolium monosodium salt (WST-1). The protein is NADH-cytochrome b5 reductase 2 (Cyb5r2) of Rattus norvegicus (Rat).